The primary structure comprises 286 residues: Cysteine-rich repeat secretory protein 57 (286 aa).

A signal peptide spans 1 to 20 (METTKKLSVLLCLFFTMNQA). Over 21-265 (ISESDSDEHM…PSRSGSFSIR (245 aa)) the chain is Extracellular. 2 consecutive Gnk2-homologous domains span residues 29 to 131 (HMAT…DKFF) and 137 to 247 (TKPN…TSNS). 10 N-linked (GlcNAc...) asparagine glycosylation sites follow: Asn-35, Asn-40, Asn-44, Asn-60, Asn-69, Asn-90, Asn-100, Asn-108, Asn-209, and Asn-246. The chain crosses the membrane as a helical span at residues 266 to 284 (GNNKILVGMILAVSVFAFL). Residues 285–286 (GL) are Cytoplasmic-facing.

This sequence belongs to the cysteine-rich repeat secretory protein family.

It is found in the membrane. In Arabidopsis thaliana (Mouse-ear cress), this protein is Cysteine-rich repeat secretory protein 57 (CRRSP57).